Consider the following 136-residue polypeptide: MGKFMKPGKVVMVLAGRYAGRKAVIVKNIDDGTADRPYSHALVAGIDRYPRKVTAPMGKKKIAKRSKIKAFVKVYNYNHLMPTRYSVDIPLDKTVVNKDVFRDPALKSKARREAKVKFEERYKTGKNKWFFQKLRF.

The 36-residue stretch at 5 to 40 folds into the KOW domain; that stretch reads MKPGKVVMVLAGRYAGRKAVIVKNIDDGTADRPYSH.

It belongs to the eukaryotic ribosomal protein eL27 family. As to quaternary structure, component of the large ribosomal subunit.

It is found in the cytoplasm. The protein localises to the cytosol. Its subcellular location is the rough endoplasmic reticulum. Functionally, component of the large ribosomal subunit. This Hippocampus comes (Tiger tail seahorse) protein is Large ribosomal subunit protein eL27 (rpl27).